A 115-amino-acid chain; its full sequence is SPbeta prophage-derived uncharacterized protein YoqS (115 aa).

In Bacillus subtilis (strain 168), this protein is SPbeta prophage-derived uncharacterized protein YoqS (yoqS).